The following is a 262-amino-acid chain: Tryptophan synthase alpha chain (262 aa).

Residues Glu-48 and Asp-59 each act as proton acceptor in the active site.

The protein belongs to the TrpA family. Tetramer of two alpha and two beta chains.

It carries out the reaction (1S,2R)-1-C-(indol-3-yl)glycerol 3-phosphate + L-serine = D-glyceraldehyde 3-phosphate + L-tryptophan + H2O. The protein operates within amino-acid biosynthesis; L-tryptophan biosynthesis; L-tryptophan from chorismate: step 5/5. The alpha subunit is responsible for the aldol cleavage of indoleglycerol phosphate to indole and glyceraldehyde 3-phosphate. This Helicobacter pylori (strain Shi470) protein is Tryptophan synthase alpha chain.